The following is a 162-amino-acid chain: UPF0254 protein MTH1148 homolog (162 aa).

Belongs to the UPF0254 family.

The sequence is that of UPF0254 protein MTH1148 homolog from Methanothermobacter thermautotrophicus (strain Winter) (Methanobacterium thermoautotrophicum).